The chain runs to 393 residues: S-adenosylmethionine synthase 1 (393 aa).

Mg(2+) is bound at residue glutamate 9. Histidine 15 contacts ATP. Glutamate 43 provides a ligand contact to K(+). L-methionine is bound by residues glutamate 56 and glutamine 99. ATP-binding positions include 167 to 169 (DGK), 235 to 238 (SGRF), aspartate 246, 252 to 253 (RK), alanine 269, lysine 273, and lysine 277. Residue aspartate 246 participates in L-methionine binding. Lysine 277 provides a ligand contact to L-methionine.

It belongs to the AdoMet synthase family. As to quaternary structure, homotetramer. Mn(2+) serves as cofactor. It depends on Mg(2+) as a cofactor. Requires Co(2+) as cofactor. The cofactor is K(+). NH4(+) is required as a cofactor. Mostly expressed in roots, and, to a lower extent, in hypocotyls and cotyledons.

The protein resides in the cytoplasm. The enzyme catalyses L-methionine + ATP + H2O = S-adenosyl-L-methionine + phosphate + diphosphate. Its pathway is amino-acid biosynthesis; S-adenosyl-L-methionine biosynthesis; S-adenosyl-L-methionine from L-methionine: step 1/1. Its activity is regulated as follows. Inhibited by products of SAMS reaction (SAM, Pi, PPi), substrate analogs (cycloleucine and ethionine), and alternative nucleotides (GTP, CTP and ADP). Strongly repressed by PPPi. Functionally, catalyzes the formation of S-adenosylmethionine from methionine and ATP. The reaction comprises two steps that are both catalyzed by the same enzyme: formation of S-adenosylmethionine (AdoMet) and triphosphate, and subsequent hydrolysis of the triphosphate. This Catharanthus roseus (Madagascar periwinkle) protein is S-adenosylmethionine synthase 1 (SAMS1).